The primary structure comprises 315 residues: Putative glycosyltransferase ORF315 (315 aa).

It belongs to the glycosyltransferase group 1 family. Glycosyltransferase 4 subfamily.

In Acidianus convivator (ABV), this protein is Putative glycosyltransferase ORF315.